Reading from the N-terminus, the 857-residue chain is Zinc finger protein 574 (857 aa).

14 C2H2-type zinc fingers span residues 15-37 (YVCS…QQSH), 58-80 (YQCL…QELH), 99-121 (YECP…RYTH), 206-228 (YKCS…QGTH), 297-319 (FSCG…QISH), 324-346 (FSCP…LKSH), 352-374 (YLCV…RRSH), 380-401 (FTCE…RRVH), 428-451 (FHCD…RFVH), 457-479 (HKCP…MLTH), 485-507 (YSCT…RLTH), 513-535 (YKCQ…QYVH), 541-563 (YKCN…QYHH), and 569-591 (YKCQ…QLGH). The segment at 597-619 (HRCRECGTNFPSVQRLQDHRCSK) adopts a C2H2-type 15; degenerate zinc-finger fold. C2H2-type zinc fingers lie at residues 628-651 (LECP…AAQH), 681-703 (LECS…RRIH), 709-731 (YPCP…RRLH), 737-759 (FKCD…KRIH), and 765-787 (HSCP…RKLH). A disordered region spans residues 648–678 (AAQHSGNKRSNVSSGKGTPVLPRNKLKGGGG). A compositionally biased stretch (polar residues) spans 651-663 (HSGNKRSNVSSGK).

The protein belongs to the krueppel C2H2-type zinc-finger protein family.

It localises to the nucleus. In terms of biological role, may be involved in transcriptional regulation. In Xenopus tropicalis (Western clawed frog), this protein is Zinc finger protein 574 (znf574).